Reading from the N-terminus, the 293-residue chain is Haloalkane dehalogenase (293 aa).

Residues Pro34 to Gly158 form the AB hydrolase-1 domain. Asp106 functions as the Nucleophile in the catalytic mechanism. Glu130 (proton donor) is an active-site residue. His272 (proton acceptor) is an active-site residue.

The protein belongs to the haloalkane dehalogenase family. Type 2 subfamily. As to quaternary structure, monomer.

The enzyme catalyses 1-haloalkane + H2O = a halide anion + a primary alcohol + H(+). It functions in the pathway xenobiotic degradation; haloalkane degradation. The protein operates within xenobiotic degradation; 1,3-dichloropropene degradation. Functionally, catalyzes hydrolytic cleavage of carbon-halogen bonds in halogenated aliphatic compounds, leading to the formation of the corresponding primary alcohols, halide ions and protons. Has a broad substrate specificity, as it is able to dehalogenate mono- and di- chlorinated and brominated alkanes (up to at least C10), and the two isomers of 1,3-dichloropropene to 3-chloroallyl alcohol; the highest activity was found with 1,2-dibromoethane, while no activity was observed with the analog 1,2-dichloroethane. The protein is Haloalkane dehalogenase (dhaA) of Pseudomonas pavonaceae.